We begin with the raw amino-acid sequence, 595 residues long: NADPH-dependent diflavin oxidoreductase 1 (595 aa).

Residues 6 to 150 (VLVLYGSQTG…VIDPWLLSFW (145 aa)) enclose the Flavodoxin-like domain. FMN is bound by residues 12-17 (SQTGTA), 59-62 (ATTG), 97-106 (LGDSSYPKFN), and D132. The FAD-binding FR-type domain maps to 204–444 (LRPFPAPLVF…WVKKGSLKFP (241 aa)). FAD contacts are provided by residues R348, 380–383 (RSFS), and 414–417 (GLCS). Residues T458, 513 to 514 (SR), and 519 to 523 (KVYVQ) contribute to the NADP(+) site. W594 provides a ligand contact to FAD.

Belongs to the NADPH-dependent diflavin oxidoreductase NDOR1 family. The protein in the N-terminal section; belongs to the flavodoxin family. This sequence in the C-terminal section; belongs to the flavoprotein pyridine nucleotide cytochrome reductase family. In terms of assembly, interacts with ciapin1; as part of the cytosolic iron-sulfur (Fe-S) protein assembly (CIA) machinery. FAD is required as a cofactor. Requires FMN as cofactor.

It localises to the cytoplasm. Its subcellular location is the perinuclear region. It carries out the reaction 2 oxidized [2Fe-2S]-[protein] + NADPH = 2 reduced [2Fe-2S]-[protein] + NADP(+) + H(+). Its function is as follows. NADPH-dependent reductase which is a central component of the cytosolic iron-sulfur (Fe-S) protein assembly (CIA) machinery. Transfers electrons from NADPH via its FAD and FMN prosthetic groups to the [2Fe-2S] cluster of ciapin1, another key component of the CIA machinery. In turn, this reduced cluster provides electrons for assembly of cytosolic iron-sulfur cluster proteins. It can also reduce the [2Fe-2S] cluster of cisd1 and activate this protein implicated in Fe/S cluster repair. The polypeptide is NADPH-dependent diflavin oxidoreductase 1 (Danio rerio (Zebrafish)).